The chain runs to 179 residues: Cytochrome c-type biogenesis protein CcmE (179 aa).

At 1 to 8 (MNPRRKSR) the chain is on the cytoplasmic side. The helical; Signal-anchor for type II membrane protein transmembrane segment at 9-29 (LTIILFVLLGVTIASSLVLYA) threads the bilayer. Residues 30–179 (LRQNIDLFYT…AVNSVEEGKK (150 aa)) are Periplasmic-facing. 2 residues coordinate heme: H131 and Y135. 2 stretches are compositionally biased toward basic and acidic residues: residues 138–148 (PDLSEKMEQVH) and 161–179 (ESDR…EGKK). Residues 138–179 (PDLSEKMEQVHKPMGISNQDMQGESDRDRLDKAVNSVEEGKK) are disordered.

The protein belongs to the CcmE/CycJ family.

Its subcellular location is the cell inner membrane. In terms of biological role, heme chaperone required for the biogenesis of c-type cytochromes. Transiently binds heme delivered by CcmC and transfers the heme to apo-cytochromes in a process facilitated by CcmF and CcmH. This chain is Cytochrome c-type biogenesis protein CcmE, found in Mannheimia succiniciproducens (strain KCTC 0769BP / MBEL55E).